A 253-amino-acid polypeptide reads, in one-letter code: Ribonuclease HII (253 aa).

The 184-residue stretch at 70–253 (DLIAGVDEVG…KTFAPIKDIL (184 aa)) folds into the RNase H type-2 domain. The a divalent metal cation site is built by D76, E77, and D168.

The protein belongs to the RNase HII family. Mn(2+) is required as a cofactor. Requires Mg(2+) as cofactor.

Its subcellular location is the cytoplasm. The enzyme catalyses Endonucleolytic cleavage to 5'-phosphomonoester.. Its function is as follows. Endonuclease that specifically degrades the RNA of RNA-DNA hybrids. This chain is Ribonuclease HII, found in Leuconostoc mesenteroides subsp. mesenteroides (strain ATCC 8293 / DSM 20343 / BCRC 11652 / CCM 1803 / JCM 6124 / NCDO 523 / NBRC 100496 / NCIMB 8023 / NCTC 12954 / NRRL B-1118 / 37Y).